Consider the following 326-residue polypeptide: Phospho-N-acetylmuramoyl-pentapeptide-transferase (326 aa).

Helical transmembrane passes span 2-22 (ILAT…FPYF), 51-71 (VPPM…LLWA), 73-93 (LTPE…LGFI), 113-133 (ILIQ…YSAE), 143-163 (GVII…IVGS), 175-195 (GLAA…AYIT), 199-219 (MNIT…LWFN), 225-245 (IFMG…TSVL), 250-270 (MLFA…IIQI), and 305-325 (VIVM…ITFL).

It belongs to the glycosyltransferase 4 family. MraY subfamily. Mg(2+) serves as cofactor.

It is found in the cell membrane. The enzyme catalyses UDP-N-acetyl-alpha-D-muramoyl-L-alanyl-gamma-D-glutamyl-meso-2,6-diaminopimeloyl-D-alanyl-D-alanine + di-trans,octa-cis-undecaprenyl phosphate = di-trans,octa-cis-undecaprenyl diphospho-N-acetyl-alpha-D-muramoyl-L-alanyl-D-glutamyl-meso-2,6-diaminopimeloyl-D-alanyl-D-alanine + UMP. It functions in the pathway cell wall biogenesis; peptidoglycan biosynthesis. Functionally, catalyzes the initial step of the lipid cycle reactions in the biosynthesis of the cell wall peptidoglycan: transfers peptidoglycan precursor phospho-MurNAc-pentapeptide from UDP-MurNAc-pentapeptide onto the lipid carrier undecaprenyl phosphate, yielding undecaprenyl-pyrophosphoryl-MurNAc-pentapeptide, known as lipid I. This is Phospho-N-acetylmuramoyl-pentapeptide-transferase from Wolbachia pipientis wMel.